A 258-amino-acid chain; its full sequence is Flap endonuclease Xni (258 aa).

Mg(2+) is bound at residue Asp109. The 5'-3' exonuclease domain occupies Val165 to Leu254. K(+) contacts are provided by Leu176, Ala177, Pro185, Ile187, and Ile190. Positions Gly189–Ala194 are interaction with DNA.

It belongs to the Xni family. The cofactor is Mg(2+). K(+) is required as a cofactor.

Its function is as follows. Has flap endonuclease activity. During DNA replication, flap endonucleases cleave the 5'-overhanging flap structure that is generated by displacement synthesis when DNA polymerase encounters the 5'-end of a downstream Okazaki fragment. The chain is Flap endonuclease Xni from Photobacterium profundum (strain SS9).